A 161-amino-acid polypeptide reads, in one-letter code: uncharacterized protein (161 aa).

It belongs to the sapovirus VP3 family.

This is an uncharacterized protein from Sapporo virus (isolate GI/Human/Germany/pJG-Sap01) (Hu/Dresden/pJG-Sap01/DE).